A 512-amino-acid polypeptide reads, in one-letter code: Cytochrome P450 4d1 (512 aa).

Heme-binding residues include Glu-316 and Cys-456.

This sequence belongs to the cytochrome P450 family. It depends on heme as a cofactor.

It localises to the endoplasmic reticulum membrane. It is found in the microsome membrane. Functionally, involved in the metabolism of insect hormones and in the breakdown of synthetic insecticides. The polypeptide is Cytochrome P450 4d1 (Cyp4d1) (Drosophila simulans (Fruit fly)).